Reading from the N-terminus, the 118-residue chain is UPF0342 protein BPUM_0928 (118 aa).

This sequence belongs to the UPF0342 family.

This chain is UPF0342 protein BPUM_0928, found in Bacillus pumilus (strain SAFR-032).